A 436-amino-acid polypeptide reads, in one-letter code: GTPase Der (436 aa).

EngA-type G domains follow at residues 4–167 (PTVA…PTEA) and 175–351 (IKFS…QSQN). GTP-binding positions include 10 to 17 (GRPNVGKS), 57 to 61 (DTGGI), 119 to 122 (NKVD), 181 to 188 (GRPNVGKS), 229 to 233 (DTAGM), and 294 to 297 (NKWD). Residues 352-436 (TRIPSAVLND…PIRLIARKRK (85 aa)) enclose the KH-like domain.

The protein belongs to the TRAFAC class TrmE-Era-EngA-EngB-Septin-like GTPase superfamily. EngA (Der) GTPase family. In terms of assembly, associates with the 50S ribosomal subunit.

Functionally, GTPase that plays an essential role in the late steps of ribosome biogenesis. This Streptococcus mutans serotype c (strain ATCC 700610 / UA159) protein is GTPase Der.